Reading from the N-terminus, the 221-residue chain is Eukaryotic translation initiation factor 3 subunit K (221 aa).

One can recognise a PCI domain in the interval tyrosine 46–lysine 207.

It belongs to the eIF-3 subunit K family. In terms of assembly, component of the eukaryotic translation initiation factor 3 (eIF-3) complex.

The protein localises to the cytoplasm. Component of the eukaryotic translation initiation factor 3 (eIF-3) complex, which is involved in protein synthesis of a specialized repertoire of mRNAs and, together with other initiation factors, stimulates binding of mRNA and methionyl-tRNAi to the 40S ribosome. The eIF-3 complex specifically targets and initiates translation of a subset of mRNAs involved in cell proliferation. The sequence is that of Eukaryotic translation initiation factor 3 subunit K from Aedes aegypti (Yellowfever mosquito).